We begin with the raw amino-acid sequence, 243 residues long: Cell division protein FtsQ (243 aa).

Over 1–19 the chain is Cytoplasmic; sequence MKRYNAKRKTHRNLKSIKK. Residues 20-40 traverse the membrane as a helical segment; the sequence is LIPTVLALLAFVSLLAGIITL. The Periplasmic portion of the chain corresponds to 41–243; that stretch reads HNPKTLPFRQ…SNGLAIQWKN (203 aa). The POTRA domain maps to 46–115; that stretch reads LPFRQIKITV…NELEIQVEEQ (70 aa).

This sequence belongs to the FtsQ/DivIB family. FtsQ subfamily. As to quaternary structure, part of a complex composed of FtsB, FtsL and FtsQ.

Its subcellular location is the cell inner membrane. Essential cell division protein. May link together the upstream cell division proteins, which are predominantly cytoplasmic, with the downstream cell division proteins, which are predominantly periplasmic. May control correct divisome assembly. In Coxiella burnetii (strain RSA 493 / Nine Mile phase I), this protein is Cell division protein FtsQ.